The sequence spans 432 residues: PC-esterase domain-containing protein 1B (432 aa).

Disordered stretches follow at residues 264–293 and 398–432; these read EWIK…LSPP and RGFG…PRPQ.

Belongs to the PC-esterase family.

The sequence is that of PC-esterase domain-containing protein 1B from Homo sapiens (Human).